A 1198-amino-acid chain; its full sequence is DNA polymerase II large subunit (1198 aa).

Disordered regions lie at residues 281 to 332 and 534 to 553; these read YKTG…PQKK and HWAE…AAES. Positions 286–319 are enriched in acidic residues; it reads DTDEADADSDDGTDEDAADDSDIDDSSAGDEEAD.

The protein belongs to the archaeal DNA polymerase II family. As to quaternary structure, heterodimer of a large subunit and a small subunit.

It catalyses the reaction DNA(n) + a 2'-deoxyribonucleoside 5'-triphosphate = DNA(n+1) + diphosphate. The catalysed reaction is Exonucleolytic cleavage in the 3'- to 5'-direction to yield nucleoside 5'-phosphates.. Possesses two activities: a DNA synthesis (polymerase) and an exonucleolytic activity that degrades single-stranded DNA in the 3'- to 5'-direction. Has a template-primer preference which is characteristic of a replicative DNA polymerase. The chain is DNA polymerase II large subunit from Natronomonas pharaonis (strain ATCC 35678 / DSM 2160 / CIP 103997 / JCM 8858 / NBRC 14720 / NCIMB 2260 / Gabara) (Halobacterium pharaonis).